Here is a 243-residue protein sequence, read N- to C-terminus: UDP-2,3-diacylglucosamine hydrolase (243 aa).

Mn(2+) contacts are provided by aspartate 8, histidine 10, aspartate 41, asparagine 79, and histidine 114. Residue 79 to 80 coordinates substrate; the sequence is NR. Substrate is bound by residues aspartate 122, lysine 164, lysine 167, and histidine 195. Histidine 195 and histidine 197 together coordinate Mn(2+).

This sequence belongs to the LpxH family. Requires Mn(2+) as cofactor.

The protein resides in the cell inner membrane. The enzyme catalyses UDP-2-N,3-O-bis[(3R)-3-hydroxytetradecanoyl]-alpha-D-glucosamine + H2O = 2-N,3-O-bis[(3R)-3-hydroxytetradecanoyl]-alpha-D-glucosaminyl 1-phosphate + UMP + 2 H(+). Its pathway is glycolipid biosynthesis; lipid IV(A) biosynthesis; lipid IV(A) from (3R)-3-hydroxytetradecanoyl-[acyl-carrier-protein] and UDP-N-acetyl-alpha-D-glucosamine: step 4/6. Its function is as follows. Hydrolyzes the pyrophosphate bond of UDP-2,3-diacylglucosamine to yield 2,3-diacylglucosamine 1-phosphate (lipid X) and UMP by catalyzing the attack of water at the alpha-P atom. Involved in the biosynthesis of lipid A, a phosphorylated glycolipid that anchors the lipopolysaccharide to the outer membrane of the cell. The polypeptide is UDP-2,3-diacylglucosamine hydrolase (Vibrio vulnificus (strain YJ016)).